Consider the following 55-residue polypeptide: Large ribosomal subunit protein bL33 (55 aa).

Belongs to the bacterial ribosomal protein bL33 family.

This chain is Large ribosomal subunit protein bL33, found in Parvibaculum lavamentivorans (strain DS-1 / DSM 13023 / NCIMB 13966).